The chain runs to 482 residues: MISLPLTTPILPSRCLLHKTRRQNSTRRRLLIRSSSSLQDQFTVETTKRVVLVRHGQSTWNEEGRIQGSSDFSVLTKKGESQAEISRQMLIDDSFDVCFTSPLKRSKKTAEIIWGSRESEMIFDYDLREIDLYSFQGLLKKEGKEKFGEAFKQWQEDPANFIIDGHYPVRELWSRARSCWPGILAHESKSVLVVAHNAVNQALLATAIGLGTEYFRSLLQSNCGVSVLDFIPRADGGSPHVCLNRLNQTPNSPLAGGSSGGRKASKQIILVCHGQGNNEDSAVINQAANNDQAMNMLGVIHSQKTAELLLDLRVSSIVCSPKTASIESSGVISRVQEAAGCLGVDNVPHYVKTKQMNELDVESVLRKSNKDNDVIASQLDEEAFSALWNRSEKAWESLLDELSDEKSNPGEIMVVVGPAMTHISLIAQCLNLTKEALGLFHLDAGSISVIDFPDGPSSKGVIRCTNYTAHLGRWSIPITKPA.

The N-terminal 34 residues, M1–S34, are a transit peptide targeting the chloroplast. H55 (tele-phosphohistidine intermediate) is an active-site residue. E129 functions as the Proton donor/acceptor in the catalytic mechanism.

The protein belongs to the phosphoglycerate mutase family.

The protein resides in the plastid. Its subcellular location is the chloroplast stroma. It carries out the reaction 2-carboxy-D-arabinitol 1-phosphate + H2O = 2-carboxy-D-arabinitol + phosphate. Its function is as follows. Phosphoglycerate mutase-like protein lacking PGM activity, but having 2-carboxy-D-arabinitol 1-phosphate (CA1P) phosphatase activity. Prevents the accumulation of D-glycero-2,3-pentodiulose-1,5-bisphosphate (PDBP) a potent inhibitor of ribulose-1,5-bisphosphate carboxylase (RuBisCO). PDBP is produced during the oxidation of ribulose-1,5-bisphosphate, the substrate of RuBisCO. This Arabidopsis thaliana (Mouse-ear cress) protein is Probable 2-carboxy-D-arabinitol-1-phosphatase.